Here is an 82-residue protein sequence, read N- to C-terminus: Probable glutamyl-tRNA(Gln) amidotransferase subunit C (82 aa).

This sequence belongs to the GatC family. In terms of assembly, heterotrimer of A, B and C subunits.

The enzyme catalyses L-glutamyl-tRNA(Gln) + L-glutamine + ATP + H2O = L-glutaminyl-tRNA(Gln) + L-glutamate + ADP + phosphate + H(+). It carries out the reaction L-aspartyl-tRNA(Asn) + L-glutamine + ATP + H2O = L-asparaginyl-tRNA(Asn) + L-glutamate + ADP + phosphate + 2 H(+). Functionally, allows the formation of correctly charged Asn-tRNA(Asn) or Gln-tRNA(Gln) through the transamidation of misacylated Asp-tRNA(Asn) or Glu-tRNA(Gln) in organisms which lack either or both of asparaginyl-tRNA or glutaminyl-tRNA synthetases. The reaction takes place in the presence of glutamine and ATP through an activated phospho-Asp-tRNA(Asn) or phospho-Glu-tRNA(Gln). The polypeptide is Probable glutamyl-tRNA(Gln) amidotransferase subunit C (Methanocaldococcus jannaschii (strain ATCC 43067 / DSM 2661 / JAL-1 / JCM 10045 / NBRC 100440) (Methanococcus jannaschii)).